The primary structure comprises 150 residues: Endoribonuclease YbeY (150 aa).

3 residues coordinate Zn(2+): histidine 116, histidine 120, and histidine 126.

Belongs to the endoribonuclease YbeY family. Zn(2+) serves as cofactor.

It localises to the cytoplasm. In terms of biological role, single strand-specific metallo-endoribonuclease involved in late-stage 70S ribosome quality control and in maturation of the 3' terminus of the 16S rRNA. In Beutenbergia cavernae (strain ATCC BAA-8 / DSM 12333 / CCUG 43141 / JCM 11478 / NBRC 16432 / NCIMB 13614 / HKI 0122), this protein is Endoribonuclease YbeY.